Consider the following 548-residue polypeptide: ATP synthase subunit alpha, mitochondrial (548 aa).

209–216 provides a ligand contact to ATP; sequence GDRQTGKT.

It belongs to the ATPase alpha/beta chains family. As to quaternary structure, F-type ATPases have 2 components, CF(1) - the catalytic core - and CF(0) - the membrane proton channel. CF(1) has five subunits: alpha(3), beta(3), gamma(1), delta(1), epsilon(1). CF(0) has three main subunits: a, b and c.

It is found in the mitochondrion. It localises to the mitochondrion inner membrane. Mitochondrial membrane ATP synthase (F(1)F(0) ATP synthase or Complex V) produces ATP from ADP in the presence of a proton gradient across the membrane which is generated by electron transport complexes of the respiratory chain. F-type ATPases consist of two structural domains, F(1) - containing the extramembraneous catalytic core, and F(0) - containing the membrane proton channel, linked together by a central stalk and a peripheral stalk. During catalysis, ATP synthesis in the catalytic domain of F(1) is coupled via a rotary mechanism of the central stalk subunits to proton translocation. Subunits alpha and beta form the catalytic core in F(1). Rotation of the central stalk against the surrounding alpha(3)beta(3) subunits leads to hydrolysis of ATP in three separate catalytic sites on the beta subunits. Subunit alpha does not bear the catalytic high-affinity ATP-binding sites. The polypeptide is ATP synthase subunit alpha, mitochondrial (ATP1) (Kluyveromyces lactis (strain ATCC 8585 / CBS 2359 / DSM 70799 / NBRC 1267 / NRRL Y-1140 / WM37) (Yeast)).